Consider the following 474-residue polypeptide: Amidophosphoribosyltransferase (474 aa).

Positions 1 to 10 (MLGESEVRDK) are excised as a propeptide. Residue Cys-11 is the Nucleophile of the active site. The 224-residue stretch at 11–234 (CGIVGIYSQD…PGEILHLNRG (224 aa)) folds into the Glutamine amidotransferase type-2 domain. Cys-250 contributes to the [4Fe-4S] cluster binding site. Mg(2+)-binding residues include Ser-297, Asp-359, and Asp-360. The [4Fe-4S] cluster site is built by Cys-396, Cys-447, and Cys-450.

In the C-terminal section; belongs to the purine/pyrimidine phosphoribosyltransferase family. Mg(2+) serves as cofactor. It depends on [4Fe-4S] cluster as a cofactor.

It carries out the reaction 5-phospho-beta-D-ribosylamine + L-glutamate + diphosphate = 5-phospho-alpha-D-ribose 1-diphosphate + L-glutamine + H2O. It participates in purine metabolism; IMP biosynthesis via de novo pathway; N(1)-(5-phospho-D-ribosyl)glycinamide from 5-phospho-alpha-D-ribose 1-diphosphate: step 1/2. Its function is as follows. Catalyzes the formation of phosphoribosylamine from phosphoribosylpyrophosphate (PRPP) and glutamine. This Methanothermobacter thermautotrophicus (strain ATCC 29096 / DSM 1053 / JCM 10044 / NBRC 100330 / Delta H) (Methanobacterium thermoautotrophicum) protein is Amidophosphoribosyltransferase.